A 76-amino-acid polypeptide reads, in one-letter code: Bacteriocin uberolysin (76 aa).

The propeptide occupies 1–6 (MDILLE). The cyclopeptide (Leu-Trp) cross-link spans 7 to 76 (LAGYTGIASG…RNLKAQAVIW (70 aa)).

It belongs to the bacteriocin class V family.

Its subcellular location is the secreted. Functionally, cyclopeptide antibiotic with bacteriolytic activity against most streptococci (except S.rattus and S.mutans), Listeria spp., enterococci and staphylococci. The polypeptide is Bacteriocin uberolysin (ublA) (Streptococcus uberis).